Here is an 87-residue protein sequence, read N- to C-terminus: HssA/B-like protein 28 (87 aa).

This sequence belongs to the hssA/B family.

The chain is HssA/B-like protein 28 (hssl28) from Dictyostelium discoideum (Social amoeba).